We begin with the raw amino-acid sequence, 344 residues long: Fructose-1,6-bisphosphatase class 1 (344 aa).

Residues E92, D115, L117, and D118 each coordinate Mg(2+). Residues 118 to 121 (DGSS), N211, Y244, and K274 each bind substrate. E280 is a Mg(2+) binding site.

This sequence belongs to the FBPase class 1 family. In terms of assembly, homotetramer. It depends on Mg(2+) as a cofactor.

Its subcellular location is the cytoplasm. It catalyses the reaction beta-D-fructose 1,6-bisphosphate + H2O = beta-D-fructose 6-phosphate + phosphate. It participates in carbohydrate biosynthesis; gluconeogenesis. This Aeromonas hydrophila subsp. hydrophila (strain ATCC 7966 / DSM 30187 / BCRC 13018 / CCUG 14551 / JCM 1027 / KCTC 2358 / NCIMB 9240 / NCTC 8049) protein is Fructose-1,6-bisphosphatase class 1.